Reading from the N-terminus, the 43-residue chain is Protein PsbN (43 aa).

A helical membrane pass occupies residues 7 to 27; that stretch reads LIVFIASLLLGVTGYSVYTAF.

Belongs to the PsbN family.

The protein resides in the plastid. The protein localises to the chloroplast thylakoid membrane. May play a role in photosystem I and II biogenesis. This is Protein PsbN from Rhodomonas salina (Cryptomonas salina).